A 1274-amino-acid polypeptide reads, in one-letter code: Myosin-binding protein C, cardiac-type (1274 aa).

M1 is subject to N-acetylmethionine. Positions 8–95 (PVSAFTKKPR…SKVKFDLKVT (88 aa)) constitute an Ig-like C2-type 1 domain. S47 carries the post-translational modification Phosphoserine. Residues 95–104 (TEPAPPEKAE) are compositionally biased toward basic and acidic residues. The interval 95-153 (TEPAPPEKAESAVAPTSMEAPETPKEVPALATQLEGNVSSPEGSVSVTQDGSVAGSQGA) is disordered. Phosphothreonine is present on T117. The span at 128-149 (LEGNVSSPEGSVSVTQDGSVAG) shows a compositional bias: polar residues. The 103-residue stretch at 157 to 259 (PIGLFLMRPQ…KFDSCNFNLT (103 aa)) folds into the Ig-like C2-type 2 domain. Zn(2+) contacts are provided by Q212, H214, E227, and H229. S279 carries the phosphoserine modification. T287 is subject to Phosphothreonine; by PKA and PKC. S288 carries the phosphoserine modification. Phosphoserine; by PKA is present on S307. Residues S312 and S427 each carry the phosphoserine modification. Ig-like C2-type domains lie at 361 to 452 (KKST…VKEP) and 452 to 546 (PPVL…KKLE). Cysteines 436 and 443 form a disulfide. S459 and S550 each carry phosphoserine. T607 is modified (phosphothreonine). Residues 645-765 (PKIHLDCPGS…PVGEDQVNLT (121 aa)) form the Ig-like C2-type 5 domain. Fibronectin type-III domains lie at 774–870 (APAA…IGPP) and 872–967 (EPTH…VQEI). The Ig-like C2-type 6 domain occupies 971-1059 (PRLQLPRHLR…ENMEDKATLV (89 aa)). Positions 1068–1163 (PPLDIRVVET…TKEPIFIPRP (96 aa)) constitute a Fibronectin type-III 3 domain. Residues 1181–1269 (PSFTQPLTNR…GEAQCECRLE (89 aa)) enclose the Ig-like C2-type 7 domain. Residue R1241 is modified to Omega-N-methylarginine.

Belongs to the immunoglobulin superfamily. MyBP family. In terms of processing, substrate for phosphorylation by PKA and PKC. Reversible phosphorylation appears to modulate contraction. Post-translationally, polyubiquitinated.

In terms of biological role, thick filament-associated protein located in the crossbridge region of vertebrate striated muscle a bands. In vitro it binds MHC, F-actin and native thin filaments, and modifies the activity of actin-activated myosin ATPase. It may modulate muscle contraction or may play a more structural role. In Rattus norvegicus (Rat), this protein is Myosin-binding protein C, cardiac-type (Mybpc3).